The sequence spans 415 residues: Gamma-glutamyl phosphate reductase (415 aa).

Belongs to the gamma-glutamyl phosphate reductase family.

Its subcellular location is the cytoplasm. It carries out the reaction L-glutamate 5-semialdehyde + phosphate + NADP(+) = L-glutamyl 5-phosphate + NADPH + H(+). Its pathway is amino-acid biosynthesis; L-proline biosynthesis; L-glutamate 5-semialdehyde from L-glutamate: step 2/2. Functionally, catalyzes the NADPH-dependent reduction of L-glutamate 5-phosphate into L-glutamate 5-semialdehyde and phosphate. The product spontaneously undergoes cyclization to form 1-pyrroline-5-carboxylate. This chain is Gamma-glutamyl phosphate reductase, found in Mycolicibacterium gilvum (strain PYR-GCK) (Mycobacterium gilvum (strain PYR-GCK)).